Consider the following 187-residue polypeptide: MIDSVNRADLFLRKPAPVALELQNEIEQFYYWEAKLLNDRRFDEWFALLAKDIHYFMPIRTTRIMRDSRLEYSGLRDYAHFDDDATMMKGRLRKITSDVSWSENPASRTRHIVSNVMIIPTEVEGEYEISSTFIVYRNRLERQLDIFAGERRDRLRRNKGEAGFEIVNRTILIDQSTILANNLSFFF.

The protein belongs to the bacterial ring-hydroxylating dioxygenase beta subunit family. In terms of assembly, this dioxygenase system consists of four proteins: the two subunits of the hydroxylase component (BedC1 and BedC2), a ferredoxin (BedB) and a ferredoxin reductase (BedA).

The catalysed reaction is benzene + NADH + O2 + H(+) = cis-1,2-dihydrobenzene-1,2-diol + NAD(+). It participates in aromatic compound metabolism; benzene degradation; catechol from benzene: step 1/2. Functionally, the beta subunit may be responsible for the substrate specificity of the enzyme. The chain is Benzene 1,2-dioxygenase subunit beta (bedC2) from Pseudomonas putida (Arthrobacter siderocapsulatus).